A 271-amino-acid chain; its full sequence is Mannosyl-3-phosphoglycerate phosphatase (271 aa).

Aspartate 13 (nucleophile) is an active-site residue. The Mg(2+) site is built by aspartate 13, aspartate 15, and aspartate 214.

The protein belongs to the HAD-like hydrolase superfamily. MPGP family. Mg(2+) serves as cofactor.

The protein localises to the cytoplasm. The catalysed reaction is 2-O-(alpha-D-mannosyl)-3-phosphoglycerate + H2O = (2R)-2-O-(alpha-D-mannosyl)-glycerate + phosphate. This is Mannosyl-3-phosphoglycerate phosphatase (yedP) from Salmonella choleraesuis (strain SC-B67).